A 367-amino-acid chain; its full sequence is Putative heat shock 70 kDa protein 7 (367 aa).

Belongs to the heat shock protein 70 family.

The chain is Putative heat shock 70 kDa protein 7 (HSPA7) from Homo sapiens (Human).